Consider the following 275-residue polypeptide: 4-hydroxy-tetrahydrodipicolinate reductase (275 aa).

NAD(+) is bound by residues Gly-13–Met-18 and Gly-108–Thr-110. His-164 acts as the Proton donor/acceptor in catalysis. Residue His-165 coordinates (S)-2,3,4,5-tetrahydrodipicolinate. Catalysis depends on Lys-168, which acts as the Proton donor. Gly-174–Thr-175 serves as a coordination point for (S)-2,3,4,5-tetrahydrodipicolinate.

The protein belongs to the DapB family.

Its subcellular location is the cytoplasm. The enzyme catalyses (S)-2,3,4,5-tetrahydrodipicolinate + NAD(+) + H2O = (2S,4S)-4-hydroxy-2,3,4,5-tetrahydrodipicolinate + NADH + H(+). The catalysed reaction is (S)-2,3,4,5-tetrahydrodipicolinate + NADP(+) + H2O = (2S,4S)-4-hydroxy-2,3,4,5-tetrahydrodipicolinate + NADPH + H(+). The protein operates within amino-acid biosynthesis; L-lysine biosynthesis via DAP pathway; (S)-tetrahydrodipicolinate from L-aspartate: step 4/4. In terms of biological role, catalyzes the conversion of 4-hydroxy-tetrahydrodipicolinate (HTPA) to tetrahydrodipicolinate. The polypeptide is 4-hydroxy-tetrahydrodipicolinate reductase (Picosynechococcus sp. (strain ATCC 27264 / PCC 7002 / PR-6) (Agmenellum quadruplicatum)).